Here is a 639-residue protein sequence, read N- to C-terminus: Chaperone protein DnaK (639 aa).

T198 carries the phosphothreonine; by autocatalysis modification. Low complexity predominate over residues 603 to 618 (AKAQTQGGAQEGAAKQ). The interval 603–639 (AKAQTQGGAQEGAAKQSNATADDVVDAEFEEVKDDKK) is disordered. Residues 625–639 (DVVDAEFEEVKDDKK) show a composition bias toward acidic residues.

Belongs to the heat shock protein 70 family.

Its function is as follows. Acts as a chaperone. This chain is Chaperone protein DnaK, found in Shewanella sp. (strain MR-7).